A 257-amino-acid polypeptide reads, in one-letter code: Enterotoxin type A (257 aa).

An N-terminal signal peptide occupies residues 1-27 (MKKTAFILLLFIALTWTTSPLVNGSEK). The cysteines at positions 120 and 130 are disulfide-linked. Zn(2+) is bound by residues His-211, His-249, and Asp-251.

The protein belongs to the staphylococcal/streptococcal toxin family. Monomer. Interacts with MHC class II molecules alpha/HLA-DRB1 and beta/HLA-DRA chains. The interaction with MHC-II molecules occurs at both zinc-dependent and zinc-independent sites. Interacts with T-cell receptor beta variable 7-9/TRBV7-9. Zn(2+) is required as a cofactor.

The protein resides in the secreted. Staphylococcal enterotoxin that activates the host immune system by binding as unprocessed molecules to major histocompatibility (MHC) complex class II and T-cell receptor (TCR) molecules. In turn, waves of cellular activation, cytokine production, and migration into the lung tissue and airways occur via alphabeta T-cells. Also causes the intoxication staphylococcal food poisoning syndrome. The illness is characterized by high fever, hypotension, diarrhea, shock, and in some cases death. The protein is Enterotoxin type A (sea) of Staphylococcus aureus (strain Newman).